A 148-amino-acid polypeptide reads, in one-letter code: Nucleoside diphosphate kinase (148 aa).

K9, F57, R85, T91, R102, and N112 together coordinate ATP. T91 is modified (phosphothreonine). The active-site Pros-phosphohistidine intermediate is the H115. At S122 the chain carries Phosphoserine.

Belongs to the NDK family. In terms of assembly, homotetramer. Mg(2+) serves as cofactor.

Its subcellular location is the cytoplasm. It catalyses the reaction a 2'-deoxyribonucleoside 5'-diphosphate + ATP = a 2'-deoxyribonucleoside 5'-triphosphate + ADP. The enzyme catalyses a ribonucleoside 5'-diphosphate + ATP = a ribonucleoside 5'-triphosphate + ADP. Functionally, major role in the synthesis of nucleoside triphosphates other than ATP. The ATP gamma phosphate is transferred to the NDP beta phosphate via a ping-pong mechanism, using a phosphorylated active-site intermediate. This is Nucleoside diphosphate kinase from Oceanobacillus iheyensis (strain DSM 14371 / CIP 107618 / JCM 11309 / KCTC 3954 / HTE831).